Consider the following 448-residue polypeptide: Proteases secretion protein PrtE (448 aa).

Topologically, residues 1-30 (MTGMDITTQDELNEAAMRDRASRDEERALR) are cytoplasmic. Residues 31–50 (LGWWLVLAGFGGFLLWALLA) form a helical membrane-spanning segment. Residues 51-448 (PLDKGVAVQG…DRMHLALTEE (398 aa)) lie on the Periplasmic side of the membrane.

Belongs to the membrane fusion protein (MFP) (TC 8.A.1) family.

It is found in the cell inner membrane. Functionally, involved in the secretion of proteases A, B, C and G. In Dickeya chrysanthemi (Pectobacterium chrysanthemi), this protein is Proteases secretion protein PrtE (prtE).